Reading from the N-terminus, the 621-residue chain is Transmembrane protein 200C (621 aa).

A disordered region spans residues 12–37; sequence ARKQDPLRPPSQIPKRKRKAKKRRKN. A compositionally biased stretch (basic residues) spans 25 to 36; it reads PKRKRKAKKRRK. The chain crosses the membrane as a helical span at residues 53–73; the sequence is GLIALCGILVLLVGIAMAVVG. Residues 80–147 form a disordered region; sequence GTNREGGKQL…RAASPSSSST (68 aa). Residues 125 to 147 are compositionally biased toward low complexity; that stretch reads SSSAGAPRSTPPARAASPSSSST. Residues 167-187 traverse the membrane as a helical segment; it reads VFGPLIMGIGIFLFICANAVL. Disordered stretches follow at residues 284–315, 347–368, and 384–598; these read WPPH…PREP, ASSC…QSTA, and LQGG…FTNK. Residues 290–303 show a composition bias toward low complexity; the sequence is APSGGRPRGAASPP. Positions 405-418 are enriched in basic and acidic residues; the sequence is PGERGSQEIPRGEL. Residues 479-490 are compositionally biased toward pro residues; sequence RAPPSPEPPPSP. 2 stretches are compositionally biased toward low complexity: residues 491 to 505 and 523 to 533; these read GSAD…KAAS and GSSQSDDPSSS. Positions 586–595 are enriched in polar residues; sequence EQPQPVQRQF.

The protein belongs to the TMEM200 family.

The protein resides in the membrane. The sequence is that of Transmembrane protein 200C (TMEM200C) from Homo sapiens (Human).